An 815-amino-acid chain; its full sequence is Protein-glutamine gamma-glutamyltransferase K (815 aa).

Disordered regions lie at residues 1 to 40 and 59 to 100; these read MDGP…RRGG and DDWG…AAGD. Positions 16–25 are enriched in pro residues; it reads WQPPTTPSPE. Phosphothreonine is present on Thr21. Phosphoserine occurs at positions 23, 80, 83, 90, and 93. The segment covering 59–87 has biased composition (basic and acidic residues); it reads DDWGPEPHRDRGSGSGRRRPDSRGSDSRR. Catalysis depends on residues Cys375, His434, and Asp457. Ca(2+)-binding residues include Asn497, Asp499, Glu546, and Glu551. Residues 795–815 are disordered; that stretch reads SNAGGNSPLGETIPMASRGGA.

Belongs to the transglutaminase superfamily. Transglutaminase family. Interacts with PLAAT4. Ca(2+) serves as cofactor. Post-translationally, palmitoylated. In terms of processing, the membrane anchorage region possesses a cluster of five cysteines within which fatty acid(s) may become thioester-linked. It is subject to phorbol ester-stimulated phosphorylation and is hypersensitive to proteolysis, which releases the enzyme in a soluble form. Tyrosine-phosphorylated.

The protein localises to the membrane. The enzyme catalyses L-glutaminyl-[protein] + L-lysyl-[protein] = [protein]-L-lysyl-N(6)-5-L-glutamyl-[protein] + NH4(+). In terms of biological role, catalyzes the cross-linking of proteins and the conjugation of polyamines to proteins. Responsible for cross-linking epidermal proteins during formation of the stratum corneum. Involved in cell proliferation. This is Protein-glutamine gamma-glutamyltransferase K (TGM1) from Canis lupus familiaris (Dog).